Reading from the N-terminus, the 471-residue chain is Argininosuccinate lyase (471 aa).

This sequence belongs to the lyase 1 family. Argininosuccinate lyase subfamily.

The protein resides in the cytoplasm. The catalysed reaction is 2-(N(omega)-L-arginino)succinate = fumarate + L-arginine. Its pathway is amino-acid biosynthesis; L-arginine biosynthesis; L-arginine from L-ornithine and carbamoyl phosphate: step 3/3. The sequence is that of Argininosuccinate lyase from Ehrlichia canis (strain Jake).